Here is a 91-residue protein sequence, read N- to C-terminus: UPF0367 protein cce_2199 (91 aa).

It belongs to the UPF0367 family.

This chain is UPF0367 protein cce_2199, found in Crocosphaera subtropica (strain ATCC 51142 / BH68) (Cyanothece sp. (strain ATCC 51142)).